We begin with the raw amino-acid sequence, 680 residues long: Translation factor GUF1 homolog, chloroplastic (680 aa).

The N-terminal 51 residues, 1–51 (MATATASRLAVPAPRTSPQAPGRRRPAAPLPSAPPRPRALSAAPRGRVVCP), are a transit peptide targeting the chloroplast. Positions 1 to 68 (MATATASRLA…ASTTDAGQDR (68 aa)) are disordered. Residues 28 to 37 (APLPSAPPRP) show a composition bias toward pro residues. The segment covering 38-60 (RALSAAPRGRVVCPAAPASSPAS) has biased composition (low complexity). Residues 75 to 256 (SNIRNFSIIA…AIVTKIPPPQ (182 aa)) enclose the tr-type G domain. GTP is bound by residues 84–91 (AHIDHGKS), 149–153 (DTPGH), and 203–206 (NKID).

Belongs to the TRAFAC class translation factor GTPase superfamily. Classic translation factor GTPase family. LepA subfamily.

The protein resides in the plastid. The protein localises to the chloroplast. It carries out the reaction GTP + H2O = GDP + phosphate + H(+). Functionally, promotes chloroplast protein synthesis. May act as a fidelity factor of the translation reaction, by catalyzing a one-codon backward translocation of tRNAs on improperly translocated ribosomes. In Oryza sativa subsp. japonica (Rice), this protein is Translation factor GUF1 homolog, chloroplastic.